Reading from the N-terminus, the 285-residue chain is 2-dehydro-3-deoxyphosphooctonate aldolase (285 aa).

Belongs to the KdsA family.

It is found in the cytoplasm. The enzyme catalyses D-arabinose 5-phosphate + phosphoenolpyruvate + H2O = 3-deoxy-alpha-D-manno-2-octulosonate-8-phosphate + phosphate. Its pathway is carbohydrate biosynthesis; 3-deoxy-D-manno-octulosonate biosynthesis; 3-deoxy-D-manno-octulosonate from D-ribulose 5-phosphate: step 2/3. It functions in the pathway bacterial outer membrane biogenesis; lipopolysaccharide biosynthesis. The sequence is that of 2-dehydro-3-deoxyphosphooctonate aldolase from Acinetobacter baumannii (strain AB307-0294).